A 955-amino-acid chain; its full sequence is UvrABC system protein A (955 aa).

35 to 42 (GLSGSGKS) serves as a coordination point for ATP. 2 consecutive ABC transporter domains span residues 322 to 601 (WGST…EESI) and 621 to 951 (GHDN…RYLK). 654-661 (GVSGSGKS) is a binding site for ATP. The segment at 754–780 (CEACQGDGLIKIEMHFLPDVYVKCDIC) adopts a C4-type zinc-finger fold.

This sequence belongs to the ABC transporter superfamily. UvrA family. As to quaternary structure, forms a heterotetramer with UvrB during the search for lesions.

It is found in the cytoplasm. The UvrABC repair system catalyzes the recognition and processing of DNA lesions. UvrA is an ATPase and a DNA-binding protein. A damage recognition complex composed of 2 UvrA and 2 UvrB subunits scans DNA for abnormalities. When the presence of a lesion has been verified by UvrB, the UvrA molecules dissociate. The polypeptide is UvrABC system protein A (Rickettsia conorii (strain ATCC VR-613 / Malish 7)).